We begin with the raw amino-acid sequence, 112 residues long: MSAEVPEAASAEEQKEMEDKVTSPEKAEEAKLKARYPHLGQKPGGSDFLRKRLQKGQKYFDSGDYNMAKAKMKNKQLPAAAPDKTEVTGDHIPTPQDLPQRKPSLVASKLAG.

At methionine 1 the chain carries N-acetylmethionine. Residues 1-11 (MSAEVPEAASA) are compositionally biased toward low complexity. The disordered stretch occupies residues 1-49 (MSAEVPEAASAEEQKEMEDKVTSPEKAEEAKLKARYPHLGQKPGGSDFL). At serine 2 the chain carries N-acetylserine. Phosphoserine is present on residues serine 2 and serine 23. The span at 12–32 (EEQKEMEDKVTSPEKAEEAKL) shows a compositional bias: basic and acidic residues. A phosphoserine; by GWL mark is found at serine 62 and serine 104. Positions 74–112 (NKQLPAAAPDKTEVTGDHIPTPQDLPQRKPSLVASKLAG) are disordered. Position 104 is a phosphoserine; by PKA (serine 104). An N6-acetyllysine modification is found at lysine 109.

The protein belongs to the endosulfine family. Interacts (when phosphorylated at Ser-62) with PPP2R2D. Interacts with SNCA. Interacts with PPP2R2A; the interaction is direct and this interaction inhibits PP2A activity. Phosphorylation at Ser-62 by MASTL/GWL during mitosis is essential for interaction with PPP2R2D (PR55-delta) and subsequent inactivation of PP2A. Phosphorylated by PKA.

The protein resides in the cytoplasm. Protein phosphatase inhibitor that specifically inhibits protein phosphatase 2A (PP2A) during mitosis. Inhibition of PP2A is enhanced when ARPP19 is phosphorylated. When phosphorylated at Ser-62 during mitosis, specifically interacts with PPP2R2D (PR55-delta) and inhibits its activity, leading to inactivation of PP2A, an essential condition to keep cyclin-B1-CDK1 activity high during M phase. May indirectly enhance GAP-43 expression by binding to the NGF-regulatory region of its mRNA. This is cAMP-regulated phosphoprotein 19 (Arpp19) from Mus musculus (Mouse).